The following is a 348-amino-acid chain: UDP-3-O-acylglucosamine N-acyltransferase (348 aa).

The active-site Proton acceptor is the H257.

Belongs to the transferase hexapeptide repeat family. LpxD subfamily. Homotrimer.

The enzyme catalyses a UDP-3-O-[(3R)-3-hydroxyacyl]-alpha-D-glucosamine + a (3R)-hydroxyacyl-[ACP] = a UDP-2-N,3-O-bis[(3R)-3-hydroxyacyl]-alpha-D-glucosamine + holo-[ACP] + H(+). It functions in the pathway bacterial outer membrane biogenesis; LPS lipid A biosynthesis. Its function is as follows. Catalyzes the N-acylation of UDP-3-O-acylglucosamine using 3-hydroxyacyl-ACP as the acyl donor. Is involved in the biosynthesis of lipid A, a phosphorylated glycolipid that anchors the lipopolysaccharide to the outer membrane of the cell. In Bartonella henselae (strain ATCC 49882 / DSM 28221 / CCUG 30454 / Houston 1) (Rochalimaea henselae), this protein is UDP-3-O-acylglucosamine N-acyltransferase.